A 292-amino-acid chain; its full sequence is Ribosomal protein L11 methyltransferase (292 aa).

T136, G159, D181, and N228 together coordinate S-adenosyl-L-methionine.

Belongs to the methyltransferase superfamily. PrmA family.

It is found in the cytoplasm. The enzyme catalyses L-lysyl-[protein] + 3 S-adenosyl-L-methionine = N(6),N(6),N(6)-trimethyl-L-lysyl-[protein] + 3 S-adenosyl-L-homocysteine + 3 H(+). Its function is as follows. Methylates ribosomal protein L11. The sequence is that of Ribosomal protein L11 methyltransferase from Rhizobium leguminosarum bv. trifolii (strain WSM2304).